The primary structure comprises 172 residues: Lipoprotein signal peptidase (172 aa).

4 consecutive transmembrane segments (helical) span residues 12-32, 43-63, 77-97, and 102-122; these read TSAANGSLAPWLGVALIVILF, VFAYGVAHEVTSFFNLILVYN, WQRWAFTALGVVAALVICYLL, and GQKMFCTALALILGGALGNVI. Active-site residues include D132 and D150. A helical membrane pass occupies residues 142–162; that stretch reads HWPAFNLADSAITVGAVLLVL.

Belongs to the peptidase A8 family.

The protein localises to the cell inner membrane. The enzyme catalyses Release of signal peptides from bacterial membrane prolipoproteins. Hydrolyzes -Xaa-Yaa-Zaa-|-(S,diacylglyceryl)Cys-, in which Xaa is hydrophobic (preferably Leu), and Yaa (Ala or Ser) and Zaa (Gly or Ala) have small, neutral side chains.. It participates in protein modification; lipoprotein biosynthesis (signal peptide cleavage). This protein specifically catalyzes the removal of signal peptides from prolipoproteins. This chain is Lipoprotein signal peptidase, found in Paraburkholderia phytofirmans (strain DSM 17436 / LMG 22146 / PsJN) (Burkholderia phytofirmans).